A 247-amino-acid polypeptide reads, in one-letter code: Probable phosphatase Shew_1420 (247 aa).

Zn(2+) contacts are provided by H8, H10, H16, H41, E74, H102, H132, D193, and H195.

The protein belongs to the PHP family. Zn(2+) is required as a cofactor.

The chain is Probable phosphatase Shew_1420 from Shewanella loihica (strain ATCC BAA-1088 / PV-4).